The following is a 151-amino-acid chain: UPF0208 membrane protein YPTB2595 (151 aa).

The next 2 membrane-spanning stretches (helical) occupy residues 46 to 66 (FGIR…IALG) and 69 to 89 (LGPA…GLWW).

Belongs to the UPF0208 family.

Its subcellular location is the cell inner membrane. This is UPF0208 membrane protein YPTB2595 from Yersinia pseudotuberculosis serotype I (strain IP32953).